Consider the following 360-residue polypeptide: MFESIQGLLDEHADLQIRLSDPAVHADQSLARKLGRRYAELSTIVEGYHQVQQLSDDLAAAKEMASEDSEFAAEVPVLEEQLAHAQEKLRRLLIPRDPDDGRDVILEVKAGEGGDESALFAADLVRMYSRYAESKGWKIEVISATESDLGGYKDIQIAVKGRSNDPAEGVFAALKFEGGVHRVQRVPVTESQGRIHTSAAGVLVFPEVDEPEEVEISQNDLKIDVYRSSGPGGQSVNTTDSAVRITHFPTGIVVAMQNEKSQLQNREAGMRVLRARILAHQQELIDAENSAVRKSQIRTMDRSERIRTYNFPENRIADHRTGYKSYNLDAVMNGDLGPVIQSAIEMDEQSRLDALSGSSE.

Gln-234 bears the N5-methylglutamine mark.

This sequence belongs to the prokaryotic/mitochondrial release factor family. Post-translationally, methylated by PrmC. Methylation increases the termination efficiency of RF1.

Its subcellular location is the cytoplasm. Its function is as follows. Peptide chain release factor 1 directs the termination of translation in response to the peptide chain termination codons UAG and UAA. This chain is Peptide chain release factor 1, found in Renibacterium salmoninarum (strain ATCC 33209 / DSM 20767 / JCM 11484 / NBRC 15589 / NCIMB 2235).